The chain runs to 377 residues: Nitric oxide reductase FlRd-NAD(+) reductase (377 aa).

Belongs to the FAD-dependent oxidoreductase family. Requires FAD as cofactor.

Its subcellular location is the cytoplasm. It carries out the reaction 2 reduced [nitric oxide reductase rubredoxin domain] + NAD(+) + H(+) = 2 oxidized [nitric oxide reductase rubredoxin domain] + NADH. The protein operates within nitrogen metabolism; nitric oxide reduction. Its function is as follows. One of at least two accessory proteins for anaerobic nitric oxide (NO) reductase. Reduces the rubredoxin moiety of NO reductase. The sequence is that of Nitric oxide reductase FlRd-NAD(+) reductase from Escherichia coli O127:H6 (strain E2348/69 / EPEC).